Reading from the N-terminus, the 273-residue chain is Nucleotide-binding protein TT_C1664 (273 aa).

8-15 (GLSGAGKT) serves as a coordination point for ATP. 57–60 (DARA) is a binding site for GTP.

Belongs to the RapZ-like family.

In terms of biological role, displays ATPase and GTPase activities. The polypeptide is Nucleotide-binding protein TT_C1664 (Thermus thermophilus (strain ATCC BAA-163 / DSM 7039 / HB27)).